Here is a 728-residue protein sequence, read N- to C-terminus: Probable 3',5'-cyclic phosphodiesterase pde-5 (728 aa).

The region spanning 214–371 is the GAF domain; it reads SMDAVIIKVM…HHAKLYDKIR (158 aa). A PDEase domain is found at 390–709; that stretch reads CNADEVNKLK…KKWEELAEEQ (320 aa). Residue His-465 is the Proton donor of the active site. Residues His-469, His-503, Asp-504, and Asp-614 each coordinate a divalent metal cation. Residues 691-728 are a coiled coil; that stretch reads MRERCEYNAKKWEELAEEQRKKQEALAQQNGEANETQE. The interval 708 to 728 is disordered; the sequence is EQRKKQEALAQQNGEANETQE. Residues 716-728 show a composition bias toward polar residues; it reads LAQQNGEANETQE.

This sequence belongs to the cyclic nucleotide phosphodiesterase family. It depends on a divalent metal cation as a cofactor.

The enzyme catalyses a nucleoside 3',5'-cyclic phosphate + H2O = a nucleoside 5'-phosphate + H(+). Redundantly with pde-1, plays a role in the AFD thermosensory neurons to regulate microvilli receptive ending morphology, possibly by regulating cGMP levels. In Caenorhabditis elegans, this protein is Probable 3',5'-cyclic phosphodiesterase pde-5 (pde-5).